Here is a 507-residue protein sequence, read N- to C-terminus: MAMASLARRKAYFLTRNISNSPTDAFRFSFSLTRGFASSGSDDNDVVIIGGGPGGYVAAIKAAQLGLKTTCIEKRGALGGTCLNVGCIPSKALLHSSHMYHEAKHVFANHGVKVSSVEVDLPAMLAQKDTAVKNLTRGVEGLFKKNKVNYVKGYGKFLSPSEVSVDTIDGENVVVKGKHIIVATGSDVKSLPGITIDEKKIVSSTGALSLTEIPKKLIVIGAGYIGLEMGSVWGRLGSEVTVVEFAADIVPAMDGEIRKQFQRSLEKQKMKFMLKTKVVGVDSSGDGVKLIVEPAEGGEQTTLEADVVLVSAGRTPFTSGLDLEKIGVETDKGGRILVNERFSTNVSGVYAIGDVIPGPMLAHKAEEDGVACVEFIAGKHGHVDYDKVPGVVYTYPEVASVGKTEEQLKKEGVSYNVGKFPFMANSRAKAIDTAEGMVKILADKETDKILGVHIMSPNAGELIHEAVLAINYDASSEDIARVCHAHPTMSEAIKEAAMATYDKPIHM.

A mitochondrion-targeting transit peptide spans 1–36 (MAMASLARRKAYFLTRNISNSPTDAFRFSFSLTRGF). FAD-binding positions include 73-82 (EKRGALGGTC), lysine 91, glycine 155, and 184-186 (TGS). An intrachain disulfide couples cysteine 82 to cysteine 87. NAD(+) contacts are provided by residues 221-228 (GAGYIGLE), glutamate 244, valine 278, and glycine 313. Residues aspartate 354 and 360–363 (MLAH) each bind FAD. Histidine 486 serves as the catalytic Proton acceptor.

It belongs to the class-I pyridine nucleotide-disulfide oxidoreductase family. Homodimer. Part of both the glycine cleavage system composed of four proteins: P, T, L and H and of the pyruvate dehydrogenase complex containing multiple copies of three enzymatic components: pyruvate dehydrogenase (E1), dihydrolipoamide acetyltransferase (E2) and lipoamide dehydrogenase (E3). It depends on FAD as a cofactor. In terms of processing, S-nytrosylated at unknown positions. Preferentially expressed in roots, flowers and siliques and at a lower level in stems and leaves.

Its subcellular location is the mitochondrion matrix. It carries out the reaction N(6)-[(R)-dihydrolipoyl]-L-lysyl-[protein] + NAD(+) = N(6)-[(R)-lipoyl]-L-lysyl-[protein] + NADH + H(+). Lipoamide dehydrogenase is a component of the glycine decarboxylase (GDC) or glycine cleavage system as well as of the alpha-ketoacid dehydrogenase complexes. LPD1 is probably the protein most often associated with the glycine decarboxylase complex while LPD2 is probably incorporated into alpha-ketoacid dehydrogenase complexes. The chain is Dihydrolipoyl dehydrogenase 2, mitochondrial (LPD2) from Arabidopsis thaliana (Mouse-ear cress).